Reading from the N-terminus, the 152-residue chain is Transcriptional regulator MraZ (152 aa).

2 consecutive SpoVT-AbrB domains span residues 5 to 52 (AHAI…PLCE) and 81 to 124 (ASEC…SETR).

The protein belongs to the MraZ family. As to quaternary structure, forms oligomers.

The protein resides in the cytoplasm. Its subcellular location is the nucleoid. The polypeptide is Transcriptional regulator MraZ (Tolumonas auensis (strain DSM 9187 / NBRC 110442 / TA 4)).